The primary structure comprises 134 residues: Ethylmalonyl-CoA/methylmalonyl-CoA epimerase (134 aa).

The 131-residue stretch at 4 to 134 folds into the VOC domain; the sequence is RLNHVAIAVP…NGCLVELEQV (131 aa). 3 residues coordinate Co(2+): histidine 7, histidine 79, and glutamate 130. The Proton donor/acceptor role is filled by glutamate 130.

This sequence belongs to the methylmalonyl-CoA epimerase family. Co(2+) is required as a cofactor. The cofactor is Mn(2+).

It catalyses the reaction (2R)-ethylmalonyl-CoA = (2S)-ethylmalonyl-CoA. It carries out the reaction (R)-methylmalonyl-CoA = (S)-methylmalonyl-CoA. Functionally, promiscuous isomerase that catalyzes epimerization of both ethylmalonyl-CoA and methylmalonyl-CoA. Has thus a dual role in the ethylmalonyl-CoA pathway for acetyl-CoA assimilation required for R.sphaeroides growth on acetate as sole carbon source. This chain is Ethylmalonyl-CoA/methylmalonyl-CoA epimerase, found in Cereibacter sphaeroides (strain ATCC 17023 / DSM 158 / JCM 6121 / CCUG 31486 / LMG 2827 / NBRC 12203 / NCIMB 8253 / ATH 2.4.1.) (Rhodobacter sphaeroides).